A 175-amino-acid chain; its full sequence is Large ribosomal subunit protein uL10 (175 aa).

Belongs to the universal ribosomal protein uL10 family. As to quaternary structure, part of the ribosomal stalk of the 50S ribosomal subunit. The N-terminus interacts with L11 and the large rRNA to form the base of the stalk. The C-terminus forms an elongated spine to which L12 dimers bind in a sequential fashion forming a multimeric L10(L12)X complex.

Functionally, forms part of the ribosomal stalk, playing a central role in the interaction of the ribosome with GTP-bound translation factors. In Prochlorococcus marinus (strain MIT 9301), this protein is Large ribosomal subunit protein uL10.